A 501-amino-acid chain; its full sequence is Arabinose import ATP-binding protein AraG (501 aa).

2 consecutive ABC transporter domains span residues 4–239 (LEFN…MVGR) and 252–495 (LGDN…LPDK). ATP is bound at residue 36-43 (GENGAGKS).

Belongs to the ABC transporter superfamily. Arabinose importer (TC 3.A.1.2.2) family. As to quaternary structure, the complex is composed of two ATP-binding proteins (AraG), two transmembrane proteins (AraH) and a solute-binding protein (AraF).

The protein localises to the cell inner membrane. It carries out the reaction L-arabinose(out) + ATP + H2O = L-arabinose(in) + ADP + phosphate + H(+). Its function is as follows. Part of the ABC transporter complex AraFGH involved in arabinose import. Responsible for energy coupling to the transport system. This is Arabinose import ATP-binding protein AraG from Rhizobium etli (strain ATCC 51251 / DSM 11541 / JCM 21823 / NBRC 15573 / CFN 42).